The primary structure comprises 201 residues: Adenylyl-sulfate kinase (201 aa).

35-42 (GLSGSGKS) is an ATP binding site. S109 serves as the catalytic Phosphoserine intermediate.

This sequence belongs to the APS kinase family.

It carries out the reaction adenosine 5'-phosphosulfate + ATP = 3'-phosphoadenylyl sulfate + ADP + H(+). It functions in the pathway sulfur metabolism; hydrogen sulfide biosynthesis; sulfite from sulfate: step 2/3. Its function is as follows. Catalyzes the synthesis of activated sulfate. The polypeptide is Adenylyl-sulfate kinase (Bacteroides thetaiotaomicron (strain ATCC 29148 / DSM 2079 / JCM 5827 / CCUG 10774 / NCTC 10582 / VPI-5482 / E50)).